Consider the following 399-residue polypeptide: uncharacterized protein (399 aa).

Residues 254 to 335 form a disordered region; sequence SRVSTGDTSP…FFRDSDDDGD (82 aa). Residues 255-264 are compositionally biased toward polar residues; it reads RVSTGDTSPY. Over residues 310–329 the composition is skewed to basic and acidic residues; it reads RNAEMKKSHSANDSEEFFRD.

This is an uncharacterized protein from Xenopus laevis (African clawed frog).